The sequence spans 1085 residues: Ubiquitin carboxyl-terminal hydrolase 36 (1085 aa).

Over residues 23–36 (GGNSSAAGSSADQA) the composition is skewed to low complexity. Disordered regions lie at residues 23-47 (GGNS…GSLQ) and 104-149 (KVVG…PKPK). Residues 173 to 481 (TGMINVGNTC…NAYIMFYELD (309 aa)) enclose the USP domain. C182 acts as the Nucleophile in catalysis. H440 serves as the catalytic Proton acceptor. Disordered stretches follow at residues 489–730 (AANR…NNSK), 745–888 (KSAD…ELLK), 963–1030 (EQRQ…FYNQ), and 1043–1085 (KFNR…QQQS). Positions 503 to 518 (STTPVPATTVSSPSPT) are enriched in low complexity. Phosphoserine occurs at positions 514 and 516. The segment covering 532 to 542 (GYSNGNAQKTA) has biased composition (polar residues). The segment covering 588–609 (NGNKSSSTSSNNSSSSNHKSIN) has biased composition (low complexity). Over residues 642–651 (MTDDHTEKPK) the composition is skewed to basic and acidic residues. Phosphothreonine is present on residues T660 and T664. Phosphoserine occurs at positions 674 and 676. The segment covering 705–730 (TNGHSKTNGSLTNGSASSSVHVNNSK) has biased composition (polar residues). Residue S749 is modified to Phosphoserine. Residues 749 to 758 (SDDDDDEEES) are compositionally biased toward acidic residues. Residues 768 to 778 (PQKQSQSQSKA) show a composition bias toward low complexity. Residues 779-788 (PPSPKTPPSP) show a composition bias toward pro residues. Residue S781 is modified to Phosphoserine. At T784 the chain carries Phosphothreonine. At S787 the chain carries Phosphoserine. Acidic residues predominate over residues 805 to 818 (EVDDIDDDDDEEEE). The segment covering 822–844 (KIQTPSKTHRNPFSSSKPSTDSP) has biased composition (polar residues). Residue T825 is modified to Phosphothreonine. The residue at position 843 (S843) is a Phosphoserine. T846 is subject to Phosphothreonine. The span at 859–884 (PVKSHQQPRVGNGYQSEATSNGSTIN) shows a compositional bias: polar residues. 2 stretches are compositionally biased toward low complexity: residues 987–998 (SGSAKGNNASNS) and 1056–1066 (QQQRALQRHLA).

The protein belongs to the peptidase C19 family. As to quaternary structure, interacts with atms/PAF1, but not with CycT.

The protein localises to the nucleus. Its subcellular location is the nucleolus. The enzyme catalyses Thiol-dependent hydrolysis of ester, thioester, amide, peptide and isopeptide bonds formed by the C-terminal Gly of ubiquitin (a 76-residue protein attached to proteins as an intracellular targeting signal).. Its function is as follows. Required for maintaining multiple types of adult stem cells, including male and female germline, epithelial follicle cell and intestinal stem cells. May function as a transcriptional repressor by continually deubiquiting histone H2B at the promoters of genes critical for cellular differentiation, thereby preventing histone H3 'Lys-4' trimethylation (H3K4). Controls selective autophagy activation by ubiquitinated proteins. This is Ubiquitin carboxyl-terminal hydrolase 36 (Usp36) from Drosophila erecta (Fruit fly).